The sequence spans 217 residues: Somatotropin (217 aa).

Residues 1-26 (MMAAGPRTSLLLAFALLCLPWTQVVG) form the signal peptide. His-46 is a Zn(2+) binding site. Cys-79 and Cys-190 form a disulfide bridge. Ser-132 is subject to Phosphoserine. Glu-199 serves as a coordination point for Zn(2+). Cysteines 207 and 215 form a disulfide.

Belongs to the somatotropin/prolactin family.

It localises to the secreted. Its function is as follows. Plays an important role in growth control. Its major role in stimulating body growth is to stimulate the liver and other tissues to secrete IGF1. It stimulates both the differentiation and proliferation of myoblasts. It also stimulates amino acid uptake and protein synthesis in muscle and other tissues. This chain is Somatotropin (GH1), found in Bos taurus (Bovine).